A 464-amino-acid polypeptide reads, in one-letter code: MLAARHFLGGLVPVRVSVRFSSGTTAPKKTSFGSLKDEDRIFTNLYGRHDWRLKGALRRGDWYKTKEILLKGPDWILGEMKTSGLRGRGGAGFPTGLKWSFMNKPSDGRPKYLVVNADEGEPGTCKDREIMRHDPHKLVEGCLVGGRAMGARAAYIYIRGEFYNEASNLQVAIREAYEAGLIGKNACGSDYDFDVFVVRGAGAYICGEETALIESIEGKQGKPRLKPPFPADVGVFGCPTTVANVETVAVSPTICRRGGTWFAGFGRERNSGTKLFNISGHVNHPCTVEEEMSVPLKELIEKHAGGVTGGWDNLLAVIPGGSSTPLIPKSVCETVLMDFDALVQAQTGLGTAAVIVMDRSTDIVKAIARLIEFYKHESCGQCTPCREGVDWMNKVMARFVKGDARPAEIDSLWEISKQIEGHTICALGDGAAWPVQGLIRHFRPELEDRMQRFAQQHRAWQAAS.

A mitochondrion-targeting transit peptide spans 1 to 20 (MLAARHFLGGLVPVRVSVRF). The residue at position 81 (lysine 81) is an N6-acetyllysine; alternate. Lysine 81 is modified (N6-succinyllysine; alternate). 87 to 96 (GRGGAGFPTG) is an NADH binding site. Position 104 is an N6-acetyllysine (lysine 104). Position 199–247 (199–247 (RGAGAYICGEETALIESIEGKQGKPRLKPPFPADVGVFGCPTTVANVET)) interacts with FMN. Residue arginine 257 is modified to Omega-N-methylarginine. Lysine 375 is subject to N6-acetyllysine. The [4Fe-4S] cluster site is built by cysteine 379, cysteine 382, cysteine 385, and cysteine 425.

Belongs to the complex I 51 kDa subunit family. As to quaternary structure, core subunit of respiratory chain NADH dehydrogenase (Complex I) which is composed of 45 different subunits. This is a component of the flavoprotein-sulfur (FP) fragment of the enzyme. Interacts with RAB5IF. FMN serves as cofactor. Requires [4Fe-4S] cluster as cofactor.

The protein resides in the mitochondrion inner membrane. It carries out the reaction a ubiquinone + NADH + 5 H(+)(in) = a ubiquinol + NAD(+) + 4 H(+)(out). Core subunit of the mitochondrial membrane respiratory chain NADH dehydrogenase (Complex I) which catalyzes electron transfer from NADH through the respiratory chain, using ubiquinone as an electron acceptor. Part of the peripheral arm of the enzyme, where the electrons from NADH are accepted by flavin mononucleotide (FMN) and then passed along a chain of iron-sulfur clusters by electron tunnelling to the final acceptor ubiquinone. Contains FMN, which is the initial electron acceptor as well as one iron-sulfur cluster. The polypeptide is NADH dehydrogenase [ubiquinone] flavoprotein 1, mitochondrial (Mus musculus (Mouse)).